We begin with the raw amino-acid sequence, 592 residues long: Protein kinase C zeta type (592 aa).

Residues 15-98 (RVRLKAHYGG…EGLIIHVFPS (84 aa)) form the PB1 domain. The interval 79 to 145 (AFRLARQCRD…KRFNRRAYCG (67 aa)) is interaction with SQSTM1. Residues 130 to 180 (GHLFQAKRFNRRAYCGQCSERIWGLARQGYRCINCKLLVHKRCHGLVPLTC) form a Phorbol-ester/DAG-type zinc finger. The Protein kinase domain maps to 252–518 (FDLIRVIGRG…FSDIKSHAFF (267 aa)). Residues 258–266 (IGRGSYAKV) and Lys281 contribute to the ATP site. Asp376 acts as the Proton acceptor in catalysis. A Phosphothreonine; by PDPK1 and PI3K modification is found at Thr410. The 72-residue stretch at 519-590 (RSIDWDLLEK…INPLLLSTEE (72 aa)) folds into the AGC-kinase C-terminal domain. Position 560 is a phosphothreonine (Thr560). Position 591 is a phosphoserine (Ser591).

This sequence belongs to the protein kinase superfamily. AGC Ser/Thr protein kinase family. PKC subfamily. As to quaternary structure, forms a ternary complex with SQSTM1 and KCNAB2. Forms another ternary complex with SQSTM1 and GABRR3. Forms a complex with SQSTM1 and MAP2K5. Interacts with PARD6A, PARD6B, PARD6G and SQSTM1. Part of a complex with PARD3, PARD6A or PARD6B or PARD6G and CDC42 or RAC1. Interacts with ADAP1/CENTA1. Forms a ternary complex composed of SQSTM1 and PAWR. Interacts directly with SQSTM1. Interacts with IKBKB. Interacts (via the protein kinase domain) with WWC1. Forms a tripartite complex with WWC1 and DDR1, but predominantly in the absence of collagen. Component of the Par polarity complex, composed of at least phosphorylated PRKCZ, PARD3 and TIAM1. Interacts with PDPK1 (via N-terminal region). Interacts with WDFY2 (via WD repeats 1-3). Interacts with VAMP2. Forms a complex with WDFY2 and VAMP2. Interacts with APPL1. Interacts with WWC1, WWC2 and WWC3. CDH5 is required for its phosphorylation at Thr-410. Phosphorylated by protein kinase PDPK1; phosphorylation is inhibited by the apoptotic C-terminal cleavage product of PKN2. Phosphorylation at Thr-410 by PI3K activates the kinase. As to expression, expressed in brain, and to a lesser extent in lung, kidney and testis.

The protein localises to the cytoplasm. Its subcellular location is the endosome. It localises to the cell junction. The protein resides in the membrane. The catalysed reaction is L-seryl-[protein] + ATP = O-phospho-L-seryl-[protein] + ADP + H(+). The enzyme catalyses L-threonyl-[protein] + ATP = O-phospho-L-threonyl-[protein] + ADP + H(+). Its activity is regulated as follows. Atypical PKCs (PRKCI and PRKCZ) exhibit an elevated basal enzymatic activity (that may be due to the interaction with SMG1 or SQSTM1) and are not regulated by diacylglycerol, phosphatidylserine, phorbol esters or calcium ions. Two specific sites, Thr-410 (activation loop of the kinase domain) and Thr-560 (turn motif), need to be phosphorylated for its full activation. Phosphatidylinositol 3,4,5-trisphosphate might be a physiological activator. Isoform 2: Constitutively active. Its function is as follows. Calcium- and diacylglycerol-independent serine/threonine-protein kinase that functions in phosphatidylinositol 3-kinase (PI3K) pathway and mitogen-activated protein (MAP) kinase cascade, and is involved in NF-kappa-B activation, mitogenic signaling, cell proliferation, cell polarity, inflammatory response and maintenance of long-term potentiation (LTP). Upon lipopolysaccharide (LPS) treatment in macrophages, or following mitogenic stimuli, functions downstream of PI3K to activate MAP2K1/MEK1-MAPK1/ERK2 signaling cascade independently of RAF1 activation. Required for insulin-dependent activation of AKT3, but may function as an adapter rather than a direct activator. Upon insulin treatment may act as a downstream effector of PI3K and contribute to the activation of translocation of the glucose transporter SLC2A4/GLUT4 and subsequent glucose transport in adipocytes. In EGF-induced cells, binds and activates MAP2K5/MEK5-MAPK7/ERK5 independently of its kinase activity and can activate JUN promoter through MEF2C. Through binding with SQSTM1/p62, functions in interleukin-1 signaling and activation of NF-kappa-B with the specific adapters RIPK1 and TRAF6. Participates in TNF-dependent transactivation of NF-kappa-B by phosphorylating and activating IKBKB kinase, which in turn leads to the degradation of NF-kappa-B inhibitors. In migrating astrocytes, forms a cytoplasmic complex with PARD6A and is recruited by CDC42 to function in the establishment of cell polarity along with the microtubule motor and dynein. In association with FEZ1, stimulates neuronal differentiation in PC12 cells. In the inflammatory response, is required for the T-helper 2 (Th2) differentiation process, including interleukin production, efficient activation of JAK1 and the subsequent phosphorylation and nuclear translocation of STAT6. May be involved in development of allergic airway inflammation (asthma), a process dependent on Th2 immune response. In the NF-kappa-B-mediated inflammatory response, can relieve SETD6-dependent repression of NF-kappa-B target genes by phosphorylating the RELA subunit at 'Ser-311'. Phosphorylates VAMP2 in vitro. Phosphorylates and activates LRRK1, which phosphorylates RAB proteins involved in intracellular trafficking. In terms of biological role, involved in late synaptic long term potention phase in CA1 hippocampal cells and long term memory maintenance. The sequence is that of Protein kinase C zeta type (PRKCZ) from Homo sapiens (Human).